Here is a 339-residue protein sequence, read N- to C-terminus: Probable cytosolic iron-sulfur protein assembly protein CIAO1 (339 aa).

7 WD repeats span residues 14–53 (HPDS…WICK), 59–98 (GHQR…FECV), 103–142 (GHEN…EYEC), 148–187 (SHTQ…WVCC), 192–231 (GHES…NEQG), 250–289 (FHTR…DPQQ), and 301–339 (AHSQ…PAGL). The LYR motif; required for interaction with HSC20 signature appears at 176–178 (LYQ).

Belongs to the WD repeat CIA1 family. As to quaternary structure, component of the CIA complex. Interacts with CIAO2A and forms a complex with CIAO2B and MMS19; the interactions with CIAO2A and CIAO2B are mutually exclusive. Interacts with CHD1L, ERCC2, IREB2 and POLD1. Component of the MMXD complex, which includes CIAO1, ERCC2, CIAO2B, MMS19 and SLC25A5. Interacts with WT1. Interacts with CIAO3. Interacts (via LYR motif) with HSC20.

The protein resides in the cytoplasm. In terms of biological role, key component of the cytosolic iron-sulfur protein assembly (CIA) complex, a multiprotein complex that mediates the incorporation of iron-sulfur cluster into extramitochondrial Fe/S proteins. As a CIA complex component, interacts specifically with CIAO2A or CIAO2B and MMS19 to assist different branches of iron-sulfur protein assembly, depending of its interactors. The complex CIAO1:CIAO2B:MMS19 binds to and facilitates the assembly of most cytosolic-nuclear Fe/S proteins. CIAO1:CIAO2A specifically matures ACO1 and stabilizes IREB2. Seems to specifically modulate the transactivation activity of WT1. As part of the mitotic spindle-associated MMXD complex it may play a role in chromosome segregation. The protein is Probable cytosolic iron-sulfur protein assembly protein CIAO1 of Mus musculus (Mouse).